A 574-amino-acid polypeptide reads, in one-letter code: Sulfate adenylyltransferase (574 aa).

The tract at residues 1–169 (MANTPHGGVL…LEAVNKLNHY (169 aa)) is N-terminal. Positions 170–394 (DYVGLRYTPA…LRESSPPRAL (225 aa)) are catalytic. Q197 serves as a coordination point for sulfate. ATP is bound by residues 197 to 200 (QTRN) and 291 to 294 (GRDH). Residues T198, R199, and N200 contribute to the active site. Residue R199 coordinates sulfate. Residue A295 participates in sulfate binding. ATP is bound at residue V333. The allosteric regulation domain; adenylyl-sulfate kinase-like stretch occupies residues 395 to 574 (QGFTIFLTGY…LESEGYFERL (180 aa)). 3'-phosphoadenylyl sulfate-binding positions include 434-437 (DTVR), R451, 477-478 (IA), and R516.

This sequence in the N-terminal section; belongs to the sulfate adenylyltransferase family. It in the C-terminal section; belongs to the APS kinase family. As to quaternary structure, homohexamer. Dimer of trimers.

The protein resides in the cytoplasm. It catalyses the reaction sulfate + ATP + H(+) = adenosine 5'-phosphosulfate + diphosphate. It functions in the pathway sulfur metabolism; hydrogen sulfide biosynthesis; sulfite from sulfate: step 1/3. With respect to regulation, allosterically inhibited by 3'-phosphoadenosine 5'-phosphosulfate (PAPS). Its function is as follows. Catalyzes the first intracellular reaction of sulfate assimilation, forming adenosine-5'-phosphosulfate (APS) from inorganic sulfate and ATP. Plays an important role in sulfate activation as a component of the biosynthesis pathway of sulfur-containing amino acids. The polypeptide is Sulfate adenylyltransferase (Emericella nidulans (strain FGSC A4 / ATCC 38163 / CBS 112.46 / NRRL 194 / M139) (Aspergillus nidulans)).